The sequence spans 360 residues: Phospho-N-acetylmuramoyl-pentapeptide-transferase (360 aa).

10 consecutive transmembrane segments (helical) span residues 21-41 (YITVRAILALLTALFISLWIG), 73-93 (TMGGVMILFSIGVSTLLWANL), 94-114 (ANSYIWVCLFVLFGYGAIGFV), 132-152 (WKYFWMSVVALVAILWLYWLG), 168-188 (IMPQLGLFYIVLSYFVIVGTG), 199-219 (GLAIMPTALVAGAFALIAWAT), 239-259 (VVVFCTAIVGASLGFLWFNTY), 263-283 (VFMGDVGSLALGGALGVVAIL), 288-308 (FLLVIMGGVFVVEALSVILQV), and 338-358 (VIIRFWIISLMLVLMGLVTLK).

This sequence belongs to the glycosyltransferase 4 family. MraY subfamily. It depends on Mg(2+) as a cofactor.

It is found in the cell inner membrane. It catalyses the reaction UDP-N-acetyl-alpha-D-muramoyl-L-alanyl-gamma-D-glutamyl-meso-2,6-diaminopimeloyl-D-alanyl-D-alanine + di-trans,octa-cis-undecaprenyl phosphate = di-trans,octa-cis-undecaprenyl diphospho-N-acetyl-alpha-D-muramoyl-L-alanyl-D-glutamyl-meso-2,6-diaminopimeloyl-D-alanyl-D-alanine + UMP. It participates in cell wall biogenesis; peptidoglycan biosynthesis. Functionally, catalyzes the initial step of the lipid cycle reactions in the biosynthesis of the cell wall peptidoglycan: transfers peptidoglycan precursor phospho-MurNAc-pentapeptide from UDP-MurNAc-pentapeptide onto the lipid carrier undecaprenyl phosphate, yielding undecaprenyl-pyrophosphoryl-MurNAc-pentapeptide, known as lipid I. This is Phospho-N-acetylmuramoyl-pentapeptide-transferase from Haemophilus influenzae (strain 86-028NP).